Here is a 147-residue protein sequence, read N- to C-terminus: HTH-type transcriptional regulator HmrR (147 aa).

One can recognise an HTH merR-type domain in the interval 1–69; sequence MNIGEASKVS…VEQIKELLAL (69 aa). Positions 4-23 form a DNA-binding region, H-T-H motif; sequence GEASKVSGVSSKMIRYYEQI.

In terms of assembly, homodimer.

It localises to the cytoplasm. Regulates the transcription of actP. It detects cytoplasmic copper stress and activates transcription in response to increasing copper concentrations. In the absence of copper, it negatively regulates the transcription of actP. The sequence is that of HTH-type transcriptional regulator HmrR (hmrR) from Sinorhizobium medicae (strain WSM419) (Ensifer medicae).